We begin with the raw amino-acid sequence, 342 residues long: Delta(6)-protoilludene synthase (342 aa).

Positions 81, 217, 221, and 225 each coordinate Mg(2+). The DDXXD motif signature appears at 81–85 (DEYSD). (2E,6E)-farnesyl diphosphate-binding residues include Arg-306 and Tyr-307.

It belongs to the terpene synthase family. Mg(2+) is required as a cofactor.

The enzyme catalyses (2E,6E)-farnesyl diphosphate = Delta(6)-protoilludene + diphosphate. In terms of biological role, delta(6)-protoilludene synthase, part of the gene cluster that mediates the biosynthesis of melleolides, a range of antifungal and phytotoxic polyketide derivatives composed of an orsellinic acid (OA) moiety esterified to various sesquiterpene alcohols. The first step in melleolides biosynthesis is performed by the delta(6)-protoilludene synthase PRO1 which catalyzes the cyclization of farnesyl diphosphate to protoilludene. The orsellinic acid synthase armB produces OA by condensing acetyl-CoA with 3 malonyl-CoA units in a three-round chain elongation reaction folowed by a C2-C7 ring closure. ArmB further catalyzes the trans-esterification of OA to the various sesquiterpene alcohols resulting from the hydroxylation of protoilludene. The melleolides cluster also includes 5 cytochrome P450 monooxygenases, 4 NAD(+)-dependent oxidoreductases, one flavin-dependent oxidoreductase, and one O-methyltransferase. The cytochrome P450 monooxygenases may be involved in protoilludene hydroxylation to elaborate melleolides with multiple alcohol groups, such as melleolide D, which carries alcohol functionalities at C-4, C-5, C-10, and C-13. The role of the NAD(+)-dependent enzymes remains unknown. Numerous melleolides, including arnamial, show 5'-O-methylation of the aromatic moiety which may be catalyzed by the methyltransferase encoded in the cluster. The flavin-dependent oxidoreductase might represent the dehydrogenase yielding the aldehyde in position 1 of arnamial and other melleolides. Finally, several halogenases, localized outside of the cluster, are able to catalyze the transfer of a single chlorine atom to the melleolide backbone, resulting in a 6'-chloromelleolide product. The chain is Delta(6)-protoilludene synthase from Armillaria ostoyae (Armillaria root rot fungus).